Reading from the N-terminus, the 202-residue chain is Snake venom metalloproteinase fibrolase (202 aa).

The Peptidase M12B domain maps to 6-202; it reads RYIELVIVAD…HNPQCILNQP (197 aa). Glu-9 contacts Ca(2+). N-linked (GlcNAc...) asparagine glycosylation occurs at Asn-25. Residue Asp-93 coordinates Ca(2+). 3 cysteine pairs are disulfide-bonded: Cys-117–Cys-197, Cys-157–Cys-181, and Cys-159–Cys-164. His-142 is a binding site for Zn(2+). Residue Glu-143 is part of the active site. Zn(2+) is bound by residues His-146 and His-152. Residues Cys-197 and Asn-200 each coordinate Ca(2+).

The protein belongs to the venom metalloproteinase (M12B) family. P-I subfamily. In terms of assembly, monomer. It depends on Zn(2+) as a cofactor. In terms of processing, glycosylated. As to expression, expressed by the venom gland.

Its subcellular location is the secreted. It carries out the reaction Hydrolysis of 14-Ala-|-Leu-15 in insulin B chain and 413-Lys-|-Leu-414 in alpha-chain of fibrinogen.. Activated by calcium and magnesium ions. Inhibited by EDTA, DTT and L-cysteine. Activity is not affected by PMSF or heparin. Its function is as follows. Has fibrino(geno)lytic activity on the alpha and beta chains of fibrinogen (FGA and FGB). Inhibits human ADP- and collagen-induced platelet aggregation on platelet-rich plasma but does not affect the thrombin-induced aggregation of rabbit washed platelets. Slightly degrades plasminogen. The sequence is that of Snake venom metalloproteinase fibrolase from Macrovipera lebetinus (Levantine viper).